We begin with the raw amino-acid sequence, 1392 residues long: Condensin complex subunit 1 (1392 aa).

The interaction with SMC2 and SMC4 stretch occupies residues 1-593 (MSPHNFEFHL…TGSKDSPSVP (593 aa)). A phosphoserine mark is found at serine 20 and serine 575. Disordered stretches follow at residues 569–602 (EAST…QSND), 945–966 (REEQ…ETTM), and 1293–1392 (FETG…RHRS). Residues 945–960 (REEQEHRAKEPKEKTA) are compositionally biased toward basic and acidic residues. A phosphoserine mark is found at serine 1300, serine 1305, serine 1320, and serine 1323. Threonine 1329 bears the Phosphothreonine mark. The short motif at 1332–1353 (PRRTKPGRPQTQQRKKSQRKAK) is the Bipartite nuclear localization signal element. Over residues 1344–1353 (QRKKSQRKAK) the composition is skewed to basic residues. 4 positions are modified to phosphoserine: serine 1358, serine 1361, serine 1362, and serine 1367. A compositionally biased stretch (acidic residues) spans 1360-1373 (ESSEDELSAEMTEE). Threonine 1375 and threonine 1380 each carry phosphothreonine; by CDK1. At serine 1386 the chain carries Phosphoserine.

The protein belongs to the CND1 (condensin subunit 1) family. As to quaternary structure, component of the condensin complex, which contains the SMC2 and SMC4 heterodimer, and three non SMC subunits that probably regulate the complex: NCAPH/BRRN1, NCAPD2/CAPD2 and NCAPG. Interacts with histones H1 and H3. Phosphorylated by CDK1. Its phosphorylation, as well as that of NCAPH and NCAPG subunits, activates the condensin complex and is required for chromosome condensation.

It is found in the nucleus. The protein resides in the cytoplasm. It localises to the chromosome. Regulatory subunit of the condensin complex, a complex required for conversion of interphase chromatin into mitotic-like condense chromosomes. The condensin complex probably introduces positive supercoils into relaxed DNA in the presence of type I topoisomerases and converts nicked DNA into positive knotted forms in the presence of type II topoisomerases. May target the condensin complex to DNA via its C-terminal domain. May promote the resolution of double-strand DNA catenanes (intertwines) between sister chromatids. Condensin-mediated compaction likely increases tension in catenated sister chromatids, providing directionality for type II topoisomerase-mediated strand exchanges toward chromatid decatenation. Required for decatenation of non-centromeric ultrafine DNA bridges during anaphase. Early in neurogenesis, may play an essential role to ensure accurate mitotic chromosome condensation in neuron stem cells, ultimately affecting neuron pool and cortex size. This Mus musculus (Mouse) protein is Condensin complex subunit 1 (Ncapd2).